Consider the following 422-residue polypeptide: UDP-N-acetylglucosamine 1-carboxyvinyltransferase (422 aa).

Position 22–23 (22–23 (KN)) interacts with phosphoenolpyruvate. R92 lines the UDP-N-acetyl-alpha-D-glucosamine pocket. C116 serves as the catalytic Proton donor. C116 bears the 2-(S-cysteinyl)pyruvic acid O-phosphothioketal mark. Residues D306 and I328 each coordinate UDP-N-acetyl-alpha-D-glucosamine.

It belongs to the EPSP synthase family. MurA subfamily.

The protein localises to the cytoplasm. The enzyme catalyses phosphoenolpyruvate + UDP-N-acetyl-alpha-D-glucosamine = UDP-N-acetyl-3-O-(1-carboxyvinyl)-alpha-D-glucosamine + phosphate. Its pathway is cell wall biogenesis; peptidoglycan biosynthesis. Functionally, cell wall formation. Adds enolpyruvyl to UDP-N-acetylglucosamine. This is UDP-N-acetylglucosamine 1-carboxyvinyltransferase from Elusimicrobium minutum (strain Pei191).